A 1475-amino-acid polypeptide reads, in one-letter code: Mediator of RNA polymerase II transcription subunit 1 (1475 aa).

A compositionally biased stretch (polar residues) spans 1–10 (MSGSNAKSSG). Disordered regions lie at residues 1 to 26 (MSGSNAKSSGTGFGSHIPSIEEKNKQ), 616 to 644 (ETDPQSGSSASGTTVSGSSSSSGSAKTSD), 709 to 992 (GVTA…VASG), 1135 to 1166 (QPQPGAAPTSSCLTTSGGSSDSAGSINPAGAS), 1184 to 1245 (NKTG…SKKA), 1263 to 1354 (KANS…RFDH), and 1387 to 1475 (PKLS…LAGE). 3 stretches are compositionally biased toward low complexity: residues 621 to 641 (SGSSASGTTVSGSSSSSGSAK), 711 to 729 (TASSSATPTTITITPITGK), and 738 to 782 (KSTA…SGSS). Phosphoserine occurs at positions 830, 834, 854, and 858. Polar residues-rich tracts occupy residues 860-874 (VYSSPKHNTASNSPK) and 888-897 (GKPSMSTLKS). Residues 919–934 (TSSGPSASSGSSGATG) show a composition bias toward low complexity. The segment covering 944–953 (APPPPPPIPP) has biased composition (pro residues). Low complexity-rich tracts occupy residues 954–966 (LASSSGSISSSQS), 973–989 (SSASGSSSTSSSATAGV), 1143–1159 (TSSCLTTSGGSSDSAGS), 1185–1225 (KTGS…TGST), and 1265–1276 (NSSGNLSSKLSG). A compositionally biased stretch (polar residues) spans 1286 to 1296 (TKSNSTNSFQE). Composition is skewed to low complexity over residues 1334–1346 (SGSVSPALSGSMS) and 1399–1409 (TSGRSTPSGSS). 2 stretches are compositionally biased toward polar residues: residues 1415–1430 (GTSSSILGPIASSTGL) and 1442–1458 (SQSGNEGLLNLSSTAGT).

It belongs to the Mediator complex subunit 1 family. As to quaternary structure, component of the Mediator complex.

It localises to the nucleus. In terms of biological role, component of the Mediator complex, a coactivator involved in the regulated transcription of nearly all RNA polymerase II-dependent genes. Mediator functions as a bridge to convey information from gene-specific regulatory proteins to the basal RNA polymerase II transcription machinery. Mediator is recruited to promoters by direct interactions with regulatory proteins and serves as a scaffold for the assembly of a functional preinitiation complex with RNA polymerase II and the general transcription factors. Required for activated transcription of the MtnA, MtnB and MtnD genes. The protein is Mediator of RNA polymerase II transcription subunit 1 (MED1) of Drosophila melanogaster (Fruit fly).